The primary structure comprises 536 residues: Indolin-2-one monooxygenase (536 aa).

Residues 18–34 (GTATHALLLGVLIFLVI) traverse the membrane as a helical segment. C480 serves as a coordination point for heme.

Belongs to the cytochrome P450 family. The cofactor is heme.

The protein localises to the membrane. It catalyses the reaction indolin-2-one + reduced [NADPH--hemoprotein reductase] + O2 = 3-hydroxyindolin-2-one + oxidized [NADPH--hemoprotein reductase] + H2O + H(+). The protein operates within secondary metabolite biosynthesis; 2,4-dihydroxy-1,4-benzoxazin-3-one biosynthesis; 2,4-dihydroxy-1,4-benzoxazin-3-one from indoleglycerol phosphate: step 3/5. Functionally, catalyzes the conversion of indolin-2-one to 3-hydroxyindolin-2-one. The chain is Indolin-2-one monooxygenase (CYP71C2) from Zea mays (Maize).